A 407-amino-acid chain; its full sequence is Peptide chain release factor subunit 1 (407 aa).

Belongs to the eukaryotic release factor 1 family. In terms of assembly, heterodimer of two subunits, one of which binds GTP.

It localises to the cytoplasm. Functionally, directs the termination of nascent peptide synthesis (translation) in response to the termination codons UAA, UAG and UGA. This is Peptide chain release factor subunit 1 (prf1) from Archaeoglobus fulgidus (strain ATCC 49558 / DSM 4304 / JCM 9628 / NBRC 100126 / VC-16).